The following is a 141-amino-acid chain: Galactose-6-phosphate isomerase subunit LacA (141 aa).

Belongs to the LacAB/RpiB family. As to quaternary structure, heteromultimeric protein consisting of LacA and LacB.

It catalyses the reaction aldehydo-D-galactose 6-phosphate = keto-D-tagatose 6-phosphate. It functions in the pathway carbohydrate metabolism; D-galactose 6-phosphate degradation; D-tagatose 6-phosphate from D-galactose 6-phosphate: step 1/1. The polypeptide is Galactose-6-phosphate isomerase subunit LacA (Streptococcus agalactiae serotype Ia (strain ATCC 27591 / A909 / CDC SS700)).